The sequence spans 357 residues: Adenosine deaminase (357 aa).

Residues His-16 and His-18 each contribute to the Zn(2+) site. His-18, Asp-20, and Gly-185 together coordinate substrate. Position 212 (His-212) interacts with Zn(2+). Glu-215 serves as the catalytic Proton donor. Position 294 (Asp-294) interacts with Zn(2+). Asp-295 contacts substrate.

It belongs to the metallo-dependent hydrolases superfamily. Adenosine and AMP deaminases family. It depends on Zn(2+) as a cofactor.

It localises to the cell membrane. The protein localises to the cell junction. The protein resides in the cytoplasmic vesicle lumen. Its subcellular location is the cytoplasm. It is found in the lysosome. It catalyses the reaction adenosine + H2O + H(+) = inosine + NH4(+). The enzyme catalyses 2'-deoxyadenosine + H2O + H(+) = 2'-deoxyinosine + NH4(+). Its function is as follows. Catalyzes the hydrolytic deamination of adenosine and 2-deoxyadenosine. Plays an important role in purine metabolism and in adenosine homeostasis. Modulates signaling by extracellular adenosine, and so contributes indirectly to cellular signaling events. May act as a positive regulator of T-cell coactivation. This is Adenosine deaminase (ADA) from Gallus gallus (Chicken).